The following is a 419-amino-acid chain: Akuammiline synthase 1 (419 aa).

His-151 acts as the Proton acceptor in catalysis. The Nuclear localization signal signature appears at 206–213 (TRRFVFPA). Asp-359 (proton acceptor) is an active-site residue.

Belongs to the plant acyltransferase family. Monomer.

It localises to the cytoplasm. It is found in the nucleus. It catalyses the reaction rhazimol + acetyl-CoA = akuammiline + CoA + H(+). It participates in alkaloid biosynthesis. Acyltransferase involved in the biosynthesis of akuammilan monoterpene indole alkaloids (MIAs) natural products, components with various biological properties such as antidiabetic, antibacterial, anti-inflammatory, anticancer, and antimalarial activities. Catalyzes the conversion of rhazimol to akuammiline. This is Akuammiline synthase 1 from Alstonia scholaris (Dogbane).